The sequence spans 172 residues: Glutamyl-tRNA(Gln) amidotransferase subunit C-4, mitochondrial (172 aa).

A mitochondrion-targeting transit peptide spans 1 to 23 (MIRIPFHLRQTPGRTLHSLVRSF). The interval 51–73 (PSKVPQRPHKSTIDGQSTPTRIP) is disordered.

It belongs to the GatC family. As to quaternary structure, subunit of the heterotrimeric GatCAB amidotransferase (AdT) complex, composed of A, B and C subunits.

Its subcellular location is the mitochondrion. The enzyme catalyses L-glutamyl-tRNA(Gln) + L-glutamine + ATP + H2O = L-glutaminyl-tRNA(Gln) + L-glutamate + ADP + phosphate + H(+). Allows the formation of correctly charged Gln-tRNA(Gln) through the transamidation of misacylated Glu-tRNA(Gln) in the mitochondria. The reaction takes place in the presence of glutamine and ATP through an activated gamma-phospho-Glu-tRNA(Gln). The polypeptide is Glutamyl-tRNA(Gln) amidotransferase subunit C-4, mitochondrial (Culex quinquefasciatus (Southern house mosquito)).